Consider the following 353-residue polypeptide: Melatonin receptor type 1A (353 aa).

Over 1–32 the chain is Extracellular; sequence MKGNVSELLNATQQAPGGGEGGRPRPSWLAST. N-linked (GlcNAc...) asparagine glycans are attached at residues Asn4 and Asn10. The helical transmembrane segment at 33 to 53 threads the bilayer; it reads LAFILIFTIVVDILGNLLVIL. Topologically, residues 54 to 66 are cytoplasmic; it reads SVYRNKKLRNSGN. A helical transmembrane segment spans residues 67–87; the sequence is IFVVSLAVADLVVAVYPYPLV. Over 88 to 105 the chain is Extracellular; that stretch reads LTSILNNGWNLGYLHCQV. Cysteines 103 and 180 form a disulfide. Residues 106–126 form a helical membrane-spanning segment; the sequence is SAFLMGLSVIGSIFNITGIAM. The Cytoplasmic portion of the chain corresponds to 127–145; that stretch reads NRYCYICHSLKYDKIYSNK. Residues 146 to 166 traverse the membrane as a helical segment; that stretch reads NSLCYVFLIWMLTLIAIMPNL. At 167 to 190 the chain is on the extracellular side; the sequence is QTGTLQYDPRIYSCTFTQSVSSAY. The helical transmembrane segment at 191–211 threads the bilayer; the sequence is TIAVVVFHFIVPMIIVIFCYL. Topologically, residues 212 to 243 are cytoplasmic; that stretch reads RIWVLVLQVRRRVKPDNKPKLKPQDFRNFVTM. The helical transmembrane segment at 244–264 threads the bilayer; that stretch reads FVVFVLFAICWAPLNLIGLIV. Residues 265 to 277 are Extracellular-facing; that stretch reads ASDPATMVPRIPE. Residues 278 to 298 traverse the membrane as a helical segment; the sequence is WLFVASYYLAYFNSCLNAIIY. At 299 to 353 the chain is on the cytoplasmic side; the sequence is GLLNQNFRKEYKKIIVSLCTAKMFFVESSNEEADKIKCKPSPLIPNNNLIKVDSV.

It belongs to the G-protein coupled receptor 1 family.

The protein resides in the cell membrane. In terms of biological role, high affinity receptor for melatonin. Likely to mediate the reproductive and circadian actions of melatonin. The activity of this receptor is mediated by pertussis toxin sensitive G proteins that inhibit adenylate cyclase activity. Possibly involved in sleep induction, by melatonin activation of the potassium channel KCNMA1/BK and the dissociation of G-beta and G-gamma subunits, thereby decreasing synaptic transmission. The polypeptide is Melatonin receptor type 1A (Mtnr1a) (Mus musculus (Mouse)).